Consider the following 254-residue polypeptide: UPF0328 protein ECU01_0070/ECU01_1540/ECU02_1570/ECU04_0080/ECU08_2100 (254 aa).

Belongs to the UPF0328 family.

This Encephalitozoon cuniculi (strain GB-M1) (Microsporidian parasite) protein is UPF0328 protein ECU01_0070/ECU01_1540/ECU02_1570/ECU04_0080/ECU08_2100.